The following is a 278-amino-acid chain: Large ribosomal subunit protein uL2 (278 aa).

Disordered regions lie at residues 32–54 and 221–278; these read SLCR…TRHI and RGMT…RNAK. Gly residues predominate over residues 232-245; sequence NGGGEGKSKSGGGR.

It belongs to the universal ribosomal protein uL2 family. As to quaternary structure, part of the 50S ribosomal subunit. Forms a bridge to the 30S subunit in the 70S ribosome.

In terms of biological role, one of the primary rRNA binding proteins. Required for association of the 30S and 50S subunits to form the 70S ribosome, for tRNA binding and peptide bond formation. It has been suggested to have peptidyltransferase activity; this is somewhat controversial. Makes several contacts with the 16S rRNA in the 70S ribosome. The sequence is that of Large ribosomal subunit protein uL2 from Akkermansia muciniphila (strain ATCC BAA-835 / DSM 22959 / JCM 33894 / BCRC 81048 / CCUG 64013 / CIP 107961 / Muc).